Here is a 295-residue protein sequence, read N- to C-terminus: Succinate dehydrogenase [ubiquinone] iron-sulfur subunit, mitochondrial (295 aa).

The 2Fe-2S ferredoxin-type domain maps to 67–144 (EKPRLQSYTL…DTKIYPLPHM (78 aa)). [2Fe-2S] cluster is bound by residues cysteine 106, cysteine 111, cysteine 114, and cysteine 126. A 4Fe-4S ferredoxin-type domain is found at 185 to 215 (ERRRLDGLYECILCACCSTSCPSYWWNQDEY). Residues cysteine 195, cysteine 198, and cysteine 201 each coordinate [4Fe-4S] cluster. Cysteine 205 contributes to the [3Fe-4S] cluster binding site. A ubiquinone is bound at residue tryptophan 210. Positions 252 and 258 each coordinate [3Fe-4S] cluster. Cysteine 262 provides a ligand contact to [4Fe-4S] cluster.

This sequence belongs to the succinate dehydrogenase/fumarate reductase iron-sulfur protein family. In terms of assembly, component of complex II composed of four subunits: a flavoprotein (FP), an iron-sulfur protein (IP), and a cytochrome b composed of a large and a small subunit. Requires [2Fe-2S] cluster as cofactor. The cofactor is [3Fe-4S] cluster. [4Fe-4S] cluster is required as a cofactor.

It is found in the mitochondrion inner membrane. The enzyme catalyses a quinone + succinate = fumarate + a quinol. Its pathway is carbohydrate metabolism; tricarboxylic acid cycle; fumarate from succinate (eukaryal route): step 1/1. Functionally, iron-sulfur protein (IP) subunit of succinate dehydrogenase (SDH) that is involved in complex II of the mitochondrial electron transport chain and is responsible for transferring electrons from succinate to ubiquinone (coenzyme Q). The chain is Succinate dehydrogenase [ubiquinone] iron-sulfur subunit, mitochondrial (SDH2) from Mycosarcoma maydis (Corn smut fungus).